Reading from the N-terminus, the 379-residue chain is Anhydro-N-acetylmuramic acid kinase (379 aa).

9–16 (GTSADGVD) serves as a coordination point for ATP.

The protein belongs to the anhydro-N-acetylmuramic acid kinase family.

It carries out the reaction 1,6-anhydro-N-acetyl-beta-muramate + ATP + H2O = N-acetyl-D-muramate 6-phosphate + ADP + H(+). It functions in the pathway amino-sugar metabolism; 1,6-anhydro-N-acetylmuramate degradation. The protein operates within cell wall biogenesis; peptidoglycan recycling. Its function is as follows. Catalyzes the specific phosphorylation of 1,6-anhydro-N-acetylmuramic acid (anhMurNAc) with the simultaneous cleavage of the 1,6-anhydro ring, generating MurNAc-6-P. Is required for the utilization of anhMurNAc either imported from the medium or derived from its own cell wall murein, and thus plays a role in cell wall recycling. In Prochlorococcus marinus (strain MIT 9313), this protein is Anhydro-N-acetylmuramic acid kinase.